We begin with the raw amino-acid sequence, 382 residues long: Pyrimidine monooxygenase RutA (382 aa).

Residues 68-69 (IK), Asn-134, Glu-143, 159-160 (RY), and Ser-209 each bind FMN.

This sequence belongs to the NtaA/SnaA/DszA monooxygenase family. RutA subfamily.

The catalysed reaction is uracil + FMNH2 + NADH + O2 = (Z)-3-ureidoacrylate + FMN + NAD(+) + H2O + H(+). It catalyses the reaction thymine + FMNH2 + NADH + O2 = (Z)-2-methylureidoacrylate + FMN + NAD(+) + H2O + H(+). Functionally, catalyzes the pyrimidine ring opening between N-3 and C-4 by an unusual flavin hydroperoxide-catalyzed mechanism, adding oxygen atoms in the process to yield ureidoacrylate peracid, that immediately reacts with FMN forming ureidoacrylate and FMN-N(5)-oxide. The FMN-N(5)-oxide reacts spontaneously with NADH to produce FMN. Requires the flavin reductase RutF to regenerate FMN in vivo. In Escherichia coli O150:H5 (strain SE15), this protein is Pyrimidine monooxygenase RutA.